Consider the following 132-residue polypeptide: Small ribosomal subunit protein uS8 (132 aa).

Belongs to the universal ribosomal protein uS8 family. Part of the 30S ribosomal subunit. Contacts proteins S5 and S12.

One of the primary rRNA binding proteins, it binds directly to 16S rRNA central domain where it helps coordinate assembly of the platform of the 30S subunit. The polypeptide is Small ribosomal subunit protein uS8 (Corynebacterium kroppenstedtii (strain DSM 44385 / JCM 11950 / CIP 105744 / CCUG 35717)).